A 341-amino-acid polypeptide reads, in one-letter code: Geranylgeranyl transferase type-2 subunit beta (341 aa).

6 PFTB repeats span residues lysine 15–asparagine 55, glutamine 62–aspartate 104, arginine 122–asparagine 163, alanine 170–asparagine 211, valine 223–lysine 264, and leucine 271–aspartate 313. Residues histidine 196–alanine 198 and arginine 243–tryptophan 255 contribute to the geranylgeranyl diphosphate site. Residues aspartate 249, cysteine 251, and histidine 301 each contribute to the Zn(2+) site.

It belongs to the protein prenyltransferase subunit beta family. As to quaternary structure, heterodimer of an alpha and a beta subunit. Zn(2+) serves as cofactor.

The catalysed reaction is geranylgeranyl diphosphate + L-cysteinyl-[protein] = S-geranylgeranyl-L-cysteinyl-[protein] + diphosphate. Its function is as follows. Catalyzes the transfer of a geranyl-geranyl moiety from geranyl-geranyl pyrophosphate to proteins having the C-terminal -XCC or -XCXC, where both cysteines may become modified. Acts on YPT1 and SEC4. This chain is Geranylgeranyl transferase type-2 subunit beta (BET2), found in Candida albicans (Yeast).